We begin with the raw amino-acid sequence, 167 residues long: Ubiquitin-fold modifier-conjugating enzyme 1 (167 aa).

The active-site Glycyl thioester intermediate is the Cys-116. Residue Lys-122 forms a Glycyl lysine isopeptide (Lys-Gly) (interchain with G-Cter in UFM1) linkage.

This sequence belongs to the ubiquitin-conjugating enzyme family. UFC1 subfamily. Interacts with UBA5 (via C-terminus). Interacts with UFL1. Interacts with UFM1. Interacts with KIRREL3. Ufmylated at Lys-122. Deufmylated by UFSP1.

In terms of biological role, E2-like enzyme which specifically catalyzes the second step in ufmylation. Accepts the ubiquitin-like modifier UFM1 from the E1 enzyme UBA5 and forms an intermediate with UFM1 via a thioester linkage. Ufmylation is involved in various processes, such as ribosome recycling, response to DNA damage, interferon response or reticulophagy (also called ER-phagy). In Homo sapiens (Human), this protein is Ubiquitin-fold modifier-conjugating enzyme 1.